A 123-amino-acid polypeptide reads, in one-letter code: Translation initiation factor 1A (123 aa).

Over residues 1–11 (MSPDKTEDEDK) the composition is skewed to acidic residues. The segment at 1 to 26 (MSPDKTEDEDKDVNVDQDQFNEEEES) is disordered. An S1-like domain is found at 28–102 (GRVILPNKKK…EKADVVYRYT (75 aa)).

Belongs to the eIF-1A family.

Functionally, seems to be required for maximal rate of protein biosynthesis. Enhances ribosome dissociation into subunits and stabilizes the binding of the initiator Met-tRNA(I) to 40 S ribosomal subunits. The protein is Translation initiation factor 1A (eIF1A) of Thermoplasma volcanium (strain ATCC 51530 / DSM 4299 / JCM 9571 / NBRC 15438 / GSS1).